The primary structure comprises 280 residues: Pantothenate synthetase (280 aa).

Methionine 31–histidine 38 provides a ligand contact to ATP. Histidine 38 serves as the catalytic Proton donor. Glutamine 62 is a binding site for (R)-pantoate. Glutamine 62 contacts beta-alanine. ATP is bound at residue glycine 150–aspartate 153. Glutamine 156 lines the (R)-pantoate pocket. ATP is bound by residues valine 179 and methionine 187–arginine 190.

Belongs to the pantothenate synthetase family. Homodimer.

It localises to the cytoplasm. The catalysed reaction is (R)-pantoate + beta-alanine + ATP = (R)-pantothenate + AMP + diphosphate + H(+). It participates in cofactor biosynthesis; (R)-pantothenate biosynthesis; (R)-pantothenate from (R)-pantoate and beta-alanine: step 1/1. In terms of biological role, catalyzes the condensation of pantoate with beta-alanine in an ATP-dependent reaction via a pantoyl-adenylate intermediate. The sequence is that of Pantothenate synthetase from Xanthomonas axonopodis pv. citri (strain 306).